The chain runs to 125 residues: RutC family protein aq_364 (125 aa).

The protein belongs to the RutC family.

The sequence is that of RutC family protein aq_364 from Aquifex aeolicus (strain VF5).